A 161-amino-acid chain; its full sequence is 3-isopropylmalate dehydratase small subunit (161 aa).

The protein belongs to the LeuD family. LeuD type 2 subfamily. Heterodimer of LeuC and LeuD.

It catalyses the reaction (2R,3S)-3-isopropylmalate = (2S)-2-isopropylmalate. Its pathway is amino-acid biosynthesis; L-leucine biosynthesis; L-leucine from 3-methyl-2-oxobutanoate: step 2/4. Functionally, catalyzes the isomerization between 2-isopropylmalate and 3-isopropylmalate, via the formation of 2-isopropylmaleate. The sequence is that of 3-isopropylmalate dehydratase small subunit from Pyrobaculum islandicum (strain DSM 4184 / JCM 9189 / GEO3).